The primary structure comprises 180 residues: MSLDSSSKSTFISQKIDTGILGEELVAKWLNLEGWQILHRRWQCPWGELDIVATKTTSSLRDSSNYKFPILAFVEVKTRSRGNWDQDGLLAVTESKQAKLWKTAEIFLSDRPELVDYSCRFDVALVRCNYIRKNSQAQKKLSIEQQISELTVDIGNSVELAGYQLVLHNYIASAFIIHLD.

This sequence belongs to the UPF0102 family.

This chain is UPF0102 protein Tery_0733, found in Trichodesmium erythraeum (strain IMS101).